A 718-amino-acid chain; its full sequence is Ribosomal RNA large subunit methyltransferase K/L (718 aa).

In terms of domain architecture, THUMP spans 43-154 (TQYRILLWSR…QDELVVSLDL (112 aa)).

It belongs to the methyltransferase superfamily. RlmKL family.

It is found in the cytoplasm. The enzyme catalyses guanosine(2445) in 23S rRNA + S-adenosyl-L-methionine = N(2)-methylguanosine(2445) in 23S rRNA + S-adenosyl-L-homocysteine + H(+). It catalyses the reaction guanosine(2069) in 23S rRNA + S-adenosyl-L-methionine = N(2)-methylguanosine(2069) in 23S rRNA + S-adenosyl-L-homocysteine + H(+). In terms of biological role, specifically methylates the guanine in position 2445 (m2G2445) and the guanine in position 2069 (m7G2069) of 23S rRNA. This Histophilus somni (strain 2336) (Haemophilus somnus) protein is Ribosomal RNA large subunit methyltransferase K/L.